The following is a 640-amino-acid chain: F-box only protein 43 (640 aa).

Phosphothreonine is present on threonine 176. Position 275 is a phosphoserine (serine 275). The interval 328-354 is disordered; that stretch reads LQEQGQSEDEMQTVHPNSDSGVLESLQ. Residues 423–480 enclose the F-box domain; sequence MGIEQLDILTELQYRNLKHILAMVLESLTSESLYSAWNVSRNWREIVAQDKKANRRRK. Residues 568-616 form a ZBR-type zinc finger; sequence ALKPCPRCQSPAKYQPHKKRGLCSRLACGFDFCVLCLCAYHGSEDCRRG. Residues cysteine 572, cysteine 575, cysteine 590, cysteine 595, cysteine 600, cysteine 603, histidine 608, and cysteine 613 each coordinate Zn(2+). The segment at 615 to 640 is disordered; it reads RGSAKARGSKDVLPGSAQSKRNLKRL.

Part of a SCF (SKP1-cullin-F-box) protein ligase complex. Interaction with SKP1 does not occur. Interacts with ANAPC2; the interaction is direct, ANAPC4, CDC16, CDC23; the interaction is direct, ANAPC10; the interaction is direct and CDC26, during spermatogenesis. Interacts with CDC20. Post-translationally, phosphorylated on Thr-176 and Ser-275 in response to calcium, which is a prerequisite for ubiquitination and proteasomal degradation. In terms of processing, ubiquitinated in response to calcium, which promotes proteasomal degradation. As to expression, present in testis and ovary (at protein level). Expression is high in immature oocytes, and diminishes after oocyte activation. Expressed post-meiotically in spermatids and sperm.

It functions in the pathway protein modification; protein ubiquitination. Functionally, required to establish and maintain the arrest of oocytes at the second meiotic metaphase until fertilization. Acts by inhibiting the anaphase-promoting complex/cyclosome (APC/C) ubiquitin ligase. Probably recognizes and binds to some phosphorylated proteins and promotes their ubiquitination and degradation. Plays a vital role in modulating the ubiquitilation of CCNB1 and CDK1 during gametogenesis. This chain is F-box only protein 43 (Fbxo43), found in Mus musculus (Mouse).